Here is a 321-residue protein sequence, read N- to C-terminus: Anther-specific protein TA-29 (321 aa).

The disordered stretch occupies residues 301 to 321 (RSDEEEAHHQSKQHKDEDIIN).

Anther specific (tapetal cells).

This Nicotiana tabacum (Common tobacco) protein is Anther-specific protein TA-29 (TA-29).